A 118-amino-acid polypeptide reads, in one-letter code: V-type proton ATPase subunit G 2 (118 aa).

Positions 26–90 (RKRKARRLKQ…VQGMQSSQQR (65 aa)) are disordered. Residues 35–55 (QAKEEAQMEVEQYRREREQEF) are compositionally biased toward basic and acidic residues. Polar residues-rich tracts occupy residues 56–69 (QSKQQAAMGSQGNL) and 78–89 (RRQVQGMQSSQQ).

This sequence belongs to the V-ATPase G subunit family. V-ATPase is a heteromultimeric enzyme made up of two complexes: the ATP-hydrolytic V1 complex and the proton translocation V0 complex. The V1 complex consists of three catalytic AB heterodimers that form a heterohexamer, three peripheral stalks each consisting of EG heterodimers, one central rotor including subunits D and F, and the regulatory subunits C and H. The proton translocation complex V0 consists of the proton transport subunit a, a ring of proteolipid subunits c9c'', rotary subunit d, subunits e and f, and the accessory subunits ATP6AP1/Ac45 and ATP6AP2/PRR.

It is found in the melanosome. The protein localises to the cytoplasmic vesicle. Its subcellular location is the clathrin-coated vesicle membrane. Functionally, subunit of the V1 complex of vacuolar(H+)-ATPase (V-ATPase), a multisubunit enzyme composed of a peripheral complex (V1) that hydrolyzes ATP and a membrane integral complex (V0) that translocates protons. V-ATPase is responsible for acidifying and maintaining the pH of intracellular compartments and in some cell types, is targeted to the plasma membrane, where it is responsible for acidifying the extracellular environment. The protein is V-type proton ATPase subunit G 2 (ATP6V1G2) of Sus scrofa (Pig).